The primary structure comprises 246 residues: Eukaryotic translation initiation factor 6 (246 aa).

2 positions are modified to phosphoserine; by CK1: Ser-174 and Ser-175.

It belongs to the eIF-6 family. As to quaternary structure, monomer. Associates with the 60S ribosomal subunit. Phosphorylation at Ser-174 and Ser-175 promotes nuclear export.

The protein localises to the cytoplasm. It localises to the nucleus. Its subcellular location is the nucleolus. In terms of biological role, binds to the 60S ribosomal subunit and prevents its association with the 40S ribosomal subunit to form the 80S initiation complex in the cytoplasm. Is also involved in ribosome biogenesis. Associates with pre-60S subunits in the nucleus and is involved in its nuclear export. The polypeptide is Eukaryotic translation initiation factor 6 (Sordaria macrospora (strain ATCC MYA-333 / DSM 997 / K(L3346) / K-hell)).